Consider the following 508-residue polypeptide: Photosystem II CP47 reaction center protein (508 aa).

6 helical membrane passes run 21–36, 101–115, 140–156, 203–218, 237–252, and 457–472; these read SVHIMHTALVAGWAGS, IVFSGLCFLAAIWHW, GIHLFLSGLACFGFGAF, IAAGTLGILAGLFHLS, VLSSSIAAVFFAAFVV, and SFALLFFFGHIWHGAR.

Belongs to the PsbB/PsbC family. PsbB subfamily. PSII is composed of 1 copy each of membrane proteins PsbA, PsbB, PsbC, PsbD, PsbE, PsbF, PsbH, PsbI, PsbJ, PsbK, PsbL, PsbM, PsbT, PsbX, PsbY, PsbZ, Psb30/Ycf12, at least 3 peripheral proteins of the oxygen-evolving complex and a large number of cofactors. It forms dimeric complexes. Binds multiple chlorophylls. PSII binds additional chlorophylls, carotenoids and specific lipids. serves as cofactor.

It is found in the plastid. The protein resides in the chloroplast thylakoid membrane. In terms of biological role, one of the components of the core complex of photosystem II (PSII). It binds chlorophyll and helps catalyze the primary light-induced photochemical processes of PSII. PSII is a light-driven water:plastoquinone oxidoreductase, using light energy to abstract electrons from H(2)O, generating O(2) and a proton gradient subsequently used for ATP formation. This chain is Photosystem II CP47 reaction center protein, found in Vitis vinifera (Grape).